The sequence spans 431 residues: Asparagine--tRNA ligase (431 aa).

It belongs to the class-II aminoacyl-tRNA synthetase family.

It is found in the cytoplasm. The enzyme catalyses tRNA(Asn) + L-asparagine + ATP = L-asparaginyl-tRNA(Asn) + AMP + diphosphate + H(+). In Thermococcus kodakarensis (strain ATCC BAA-918 / JCM 12380 / KOD1) (Pyrococcus kodakaraensis (strain KOD1)), this protein is Asparagine--tRNA ligase.